A 313-amino-acid polypeptide reads, in one-letter code: Ribosomal protein L11 methyltransferase (313 aa).

The S-adenosyl-L-methionine site is built by Thr-154, Gly-179, Asp-201, and Asn-242.

Belongs to the methyltransferase superfamily. PrmA family.

The protein localises to the cytoplasm. The enzyme catalyses L-lysyl-[protein] + 3 S-adenosyl-L-methionine = N(6),N(6),N(6)-trimethyl-L-lysyl-[protein] + 3 S-adenosyl-L-homocysteine + 3 H(+). In terms of biological role, methylates ribosomal protein L11. This chain is Ribosomal protein L11 methyltransferase, found in Xanthomonas oryzae pv. oryzae (strain MAFF 311018).